We begin with the raw amino-acid sequence, 305 residues long: UDP-3-O-acyl-N-acetylglucosamine deacetylase (305 aa).

3 residues coordinate Zn(2+): His-78, His-235, and Asp-239. Catalysis depends on His-262, which acts as the Proton donor.

The protein belongs to the LpxC family. Zn(2+) is required as a cofactor.

It carries out the reaction a UDP-3-O-[(3R)-3-hydroxyacyl]-N-acetyl-alpha-D-glucosamine + H2O = a UDP-3-O-[(3R)-3-hydroxyacyl]-alpha-D-glucosamine + acetate. It participates in glycolipid biosynthesis; lipid IV(A) biosynthesis; lipid IV(A) from (3R)-3-hydroxytetradecanoyl-[acyl-carrier-protein] and UDP-N-acetyl-alpha-D-glucosamine: step 2/6. In terms of biological role, catalyzes the hydrolysis of UDP-3-O-myristoyl-N-acetylglucosamine to form UDP-3-O-myristoylglucosamine and acetate, the committed step in lipid A biosynthesis. This chain is UDP-3-O-acyl-N-acetylglucosamine deacetylase, found in Geobacter sp. (strain M21).